The primary structure comprises 224 residues: Synaptogyrin-2 (224 aa).

Methionine 1 bears the N-acetylmethionine mark. Position 3 is a phosphoserine (serine 3). Positions 20–171 constitute an MARVEL domain; that stretch reads FLKQPQVVVR…LAFLAYQRYK (152 aa). The next 4 helical transmembrane spans lie at 26–46, 73–93, 105–125, and 147–167; these read VVVR…IFGE, AIGV…IYFP, VIGD…GFCF, and AAIT…FLAY. A disordered region spans residues 196-224; that stretch reads PGVPADTYQQPPFTQNAESTEGYQPPPVY. The span at 202–217 shows a compositional bias: polar residues; that stretch reads TYQQPPFTQNAESTEG.

Belongs to the synaptogyrin family. May be tyrosine phosphorylated by Src.

The protein resides in the cytoplasmic vesicle membrane. It is found in the cytoplasmic vesicle. Its subcellular location is the secretory vesicle. The protein localises to the synaptic vesicle membrane. In terms of biological role, may play a role in regulated exocytosis. In neuronal cells, modulates the localization of synaptophysin/SYP into synaptic-like microvesicles and may therefore play a role in the formation and/or the maturation of this vesicles. May also play a role in GLUT4 storage and transport to the plasma membrane. In Bos taurus (Bovine), this protein is Synaptogyrin-2.